A 194-amino-acid chain; its full sequence is Cytochrome b-245 light chain (194 aa).

Over 2-7 (GQIEWA) the chain is Cytoplasmic. A helical transmembrane segment spans residues 8-30 (MWANEQALASGLILVAGGIVATA). At 31–35 (GRFTQ) the chain is on the extracellular side. A helical membrane pass occupies residues 36 to 53 (WYFGTYAIAAGVLVCLLE). Residues 54-69 (YPRGSRAKGSTLERCG) are Cytoplasmic-facing. An intramembrane segment occupies 70 to 80 (QRYLTAVLKLL). Topologically, residues 81–86 (GPLSRN) are cytoplasmic. A helical membrane pass occupies residues 87-104 (YYFRAALHLALSVPAGFL). Position 105 (L105) is a topological domain, extracellular. Residues 106–126 (ATILGTVCLVIASIIYLLAAV) form a helical membrane-spanning segment. Topologically, residues 127–194 (RGEQWTPIEP…NPIPVTDEVV (68 aa)) are cytoplasmic. Residues 134–194 (IEPRPKERPQ…NPIPVTDEVV (61 aa)) are disordered. T147 carries the phosphothreonine modification. K149 participates in a covalent cross-link: Glycyl lysine isopeptide (Lys-Gly) (interchain with G-Cter in ubiquitin).

This sequence belongs to the p22phox family. Component of the phagocyte NADPH oxidase core complex/cytochrome b558 complex, composed of CYBB (heavy chain (beta)) and CYBA (light chain (alpha)). Component of the phagocyte NADPH oxidase complex composed of an obligatory core heterodimer formed by the membrane proteins CYBA and CYBB and the cytosolic regulatory subunits NCF1/p47-phox, NCF2/p67-phox, NCF4/p40-phox and the small GTPase RAC1 or RAC2. Interacts with NCF1 (via SH3 domain). Interacts with SH3PXD2A. Interacts with DUOX1, DUOX2 and TPO. Interacts with NOX4; this interaction mediates superoxide generation. Interacts with calprotectin (S100A8/9). Interacts with GBP7. Interacts with NOXO1. Forms a heterodimer with NOX3 and is essential for activity and cell membrane localization of NOX3. Interacts with NOX1. Phosphorylation at Thr-147 enhances NADPH oxidase activity by promoting NCF1/p47-phox binding. Post-translationally, ubiquitinated at Lys-149 likely by RNF145.

It localises to the cell membrane. Its function is as follows. Subunit of NADPH oxidase complexes that is required for the NADPH oxidase activity that generates, in various cell types, superoxide from molecular oxygen utilizing NADPH as an electron donor. Subunit of the phagocyte NADPH oxidase complex that mediates the transfer of electrons from cytosolic NADPH to O2 to produce the superoxide anion (O2(-)). In the activated complex, electrons are first transferred from NADPH to flavin adenine dinucleotide (FAD) and subsequently transferred via two heme molecules to molecular oxygen, producing superoxide through an outer-sphere reaction. Activation of the NADPH oxidase complex is initiated by the assembly of cytosolic subunits of the NADPH oxidase complex with the core NADPH oxidase complex to form a complex at the plasma membrane or phagosomal membrane. This activation process is initiated by phosphorylation dependent binding of the cytosolic NCF1/p47-phox subunit to the C-terminus of CYBA/p22-phox. Aassociates with NOX3 to form a functional NADPH oxidase constitutively generating superoxide. The protein is Cytochrome b-245 light chain of Oryctolagus cuniculus (Rabbit).